Reading from the N-terminus, the 365-residue chain is MSKPAVKSVPSATAKTATRAANPRQKAKAPKQAKPEGKGRAKPSKDKPRAEIKKALHPRNAHLNGYDFPALISAFPRLKTFVRPTPYGALSVNFADPLAVKTLNAALLKHHYGIGSWNIPEGALCPPIPGRVDYVHYVADLLAEGDKSCAMDKARVLDIGTGANGIYPILGCQVYGWQYVASDINAHSLANVQSIIEQNPVLQGRISLRLQPDDKAVFKGIIQAEERFELTLCNPPFHASMAEASEGTKRKVNNLQLNRGSSVKAAPKLNFGGQAAELWCQGGEGQFLATMIRESQMFADQCLWFTSLVSKQENLKPCYQALAQLNVDTVKTIEMQQGNKITRVLAWSFQSAAKRKLWRAEHLAR.

The interval 1–50 (MSKPAVKSVPSATAKTATRAANPRQKAKAPKQAKPEGKGRAKPSKDKPRA) is disordered. Residues 33 to 50 (AKPEGKGRAKPSKDKPRA) are compositionally biased toward basic and acidic residues.

The protein belongs to the methyltransferase superfamily. METTL16/RlmF family.

It localises to the cytoplasm. The enzyme catalyses adenosine(1618) in 23S rRNA + S-adenosyl-L-methionine = N(6)-methyladenosine(1618) in 23S rRNA + S-adenosyl-L-homocysteine + H(+). Functionally, specifically methylates the adenine in position 1618 of 23S rRNA. The polypeptide is Ribosomal RNA large subunit methyltransferase F (Shewanella baltica (strain OS195)).